The chain runs to 484 residues: Acetyl-coenzyme A carboxylase carboxyl transferase subunit beta, chloroplastic (484 aa).

A CoA carboxyltransferase N-terminal domain is found at 223–484 (LWIQCDNCYG…LHAFFPLNKN (262 aa)). Zn(2+)-binding residues include Cys227, Cys230, Cys243, and Cys246. Residues 227–246 (CDNCYGLMYKKVKMNVCEQC) form a C4-type zinc finger.

The protein belongs to the AccD/PCCB family. Acetyl-CoA carboxylase is a heterohexamer composed of biotin carboxyl carrier protein, biotin carboxylase and 2 subunits each of ACCase subunit alpha and ACCase plastid-coded subunit beta (accD). The cofactor is Zn(2+).

Its subcellular location is the plastid. The protein resides in the chloroplast stroma. It carries out the reaction N(6)-carboxybiotinyl-L-lysyl-[protein] + acetyl-CoA = N(6)-biotinyl-L-lysyl-[protein] + malonyl-CoA. It functions in the pathway lipid metabolism; malonyl-CoA biosynthesis; malonyl-CoA from acetyl-CoA: step 1/1. Functionally, component of the acetyl coenzyme A carboxylase (ACC) complex. Biotin carboxylase (BC) catalyzes the carboxylation of biotin on its carrier protein (BCCP) and then the CO(2) group is transferred by the transcarboxylase to acetyl-CoA to form malonyl-CoA. This Olimarabidopsis pumila (Dwarf rocket) protein is Acetyl-coenzyme A carboxylase carboxyl transferase subunit beta, chloroplastic.